A 245-amino-acid chain; its full sequence is DNA polymerase III subunit epsilon (245 aa).

Positions 11 and 13 each coordinate a divalent metal cation. The substrate site is built by aspartate 11, glutamate 13, glutamine 60, and histidine 65. Catalysis depends on histidine 161, which acts as the Proton acceptor. Aspartate 166 is an a divalent metal cation binding site. Aspartate 166 contacts substrate.

In terms of assembly, the DNA polymerase holoenzyme is a complex that contains 10 different types of subunits. These subunits are organized into 3 functionally essential subassemblies: the pol III core, the beta sliding clamp processivity factor and the clamp-loading complex. The pol III core (subunits alpha,epsilon and theta) contains the polymerase and the 3'-5' exonuclease proofreading activities. The polymerase is tethered to the template via the sliding clamp processivity factor. The clamp-loading complex assembles the beta processivity factor onto the primer template and plays a central role in the organization and communication at the replication fork. This complex contains delta, delta', psi and chi, and copies of either or both of two different DnaX proteins, gamma and tau. The composition of the holoenzyme is, therefore: (alpha,epsilon,theta)[2]-(gamma/tau)[3]-delta,delta', psi,chi-beta[4]. The cofactor is Mg(2+). Requires Mn(2+) as cofactor.

The enzyme catalyses DNA(n) + a 2'-deoxyribonucleoside 5'-triphosphate = DNA(n+1) + diphosphate. Its function is as follows. DNA polymerase III is a complex, multichain enzyme responsible for most of the replicative synthesis in bacteria. The epsilon subunit contain the editing function and is a proofreading 3'-5' exonuclease. This chain is DNA polymerase III subunit epsilon (dnaQ), found in Buchnera aphidicola subsp. Baizongia pistaciae (strain Bp).